Consider the following 284-residue polypeptide: 2-dehydro-3-deoxyphosphooctonate aldolase (284 aa).

Belongs to the KdsA family.

It is found in the cytoplasm. It carries out the reaction D-arabinose 5-phosphate + phosphoenolpyruvate + H2O = 3-deoxy-alpha-D-manno-2-octulosonate-8-phosphate + phosphate. It participates in carbohydrate biosynthesis; 3-deoxy-D-manno-octulosonate biosynthesis; 3-deoxy-D-manno-octulosonate from D-ribulose 5-phosphate: step 2/3. The protein operates within bacterial outer membrane biogenesis; lipopolysaccharide biosynthesis. This Vibrio atlanticus (strain LGP32) (Vibrio splendidus (strain Mel32)) protein is 2-dehydro-3-deoxyphosphooctonate aldolase.